The chain runs to 238 residues: tRNA (guanine-N(7)-)-methyltransferase (238 aa).

Over residues 1-12 (MTDTAENQTPND) the composition is skewed to polar residues. Residues 1–20 (MTDTAENQTPNDRQAGHPRS) are disordered. S-adenosyl-L-methionine-binding residues include Glu-70, Asp-95, Asp-122, and Asp-145. Asp-145 is an active-site residue. Substrate-binding positions include Lys-149, Asp-181, and 216–219 (TKFE).

The protein belongs to the class I-like SAM-binding methyltransferase superfamily. TrmB family.

It carries out the reaction guanosine(46) in tRNA + S-adenosyl-L-methionine = N(7)-methylguanosine(46) in tRNA + S-adenosyl-L-homocysteine. The protein operates within tRNA modification; N(7)-methylguanine-tRNA biosynthesis. Functionally, catalyzes the formation of N(7)-methylguanine at position 46 (m7G46) in tRNA. In Neisseria gonorrhoeae (strain NCCP11945), this protein is tRNA (guanine-N(7)-)-methyltransferase.